The sequence spans 307 residues: Dof zinc finger protein DOF5.4 (307 aa).

The Dof-type zinc finger occupies 51 to 105 (LKCPRCNSLNTKFCYYNNYNLSQPRHFCKNCRRYWTKGGVLRNVPVGGGCRKAKR). The Zn(2+) site is built by C53, C56, C78, and C81. Residues 96–147 (VGGGCRKAKRSKTKQVPSSSSADKPTTTQDDHHVEEKSSTGSHSSSESSSLT) form a disordered region. A compositionally biased stretch (polar residues) spans 109 to 123 (KQVPSSSSADKPTTT). Basic and acidic residues predominate over residues 124 to 133 (QDDHHVEEKS). Positions 134 to 147 (STGSHSSSESSSLT) are enriched in low complexity.

The protein localises to the nucleus. Transcription factor that binds specifically to a 5'-AA[AG]G-3' consensus core sequence. Enhances the DNA binding of OBF transcription factors to OCS elements. This is Dof zinc finger protein DOF5.4 (DOF5.4) from Arabidopsis thaliana (Mouse-ear cress).